The chain runs to 321 residues: Phospho-N-acetylmuramoyl-pentapeptide-transferase (321 aa).

10 helical membrane passes run 1–21, 49–69, 77–97, 112–132, 140–160, 176–196, 200–220, 225–245, 250–270, and 300–320; these read MIYV…PILI, TMGG…AIIF, ILLL…DYII, FLAQ…FNMI, IPFT…IVFW, GLAT…SFML, AVGT…IYNV, VFMG…VSIM, ISLI…ILQV, and VVSV…WIGV.

The protein belongs to the glycosyltransferase 4 family. MraY subfamily. The cofactor is Mg(2+).

The protein localises to the cell membrane. The enzyme catalyses UDP-N-acetyl-alpha-D-muramoyl-L-alanyl-gamma-D-glutamyl-L-lysyl-D-alanyl-D-alanine + di-trans,octa-cis-undecaprenyl phosphate = Mur2Ac(oyl-L-Ala-gamma-D-Glu-L-Lys-D-Ala-D-Ala)-di-trans,octa-cis-undecaprenyl diphosphate + UMP. It functions in the pathway cell wall biogenesis; peptidoglycan biosynthesis. In terms of biological role, catalyzes the initial step of the lipid cycle reactions in the biosynthesis of the cell wall peptidoglycan: transfers peptidoglycan precursor phospho-MurNAc-pentapeptide from UDP-MurNAc-pentapeptide onto the lipid carrier undecaprenyl phosphate, yielding undecaprenyl-pyrophosphoryl-MurNAc-pentapeptide, known as lipid I. The protein is Phospho-N-acetylmuramoyl-pentapeptide-transferase of Staphylococcus carnosus (strain TM300).